Here is a 438-residue protein sequence, read N- to C-terminus: 3-phosphoshikimate 1-carboxyvinyltransferase (438 aa).

Positions 21, 22, and 26 each coordinate 3-phosphoshikimate. Lysine 21 is a phosphoenolpyruvate binding site. Residues glycine 95 and arginine 123 each contribute to the phosphoenolpyruvate site. Residues serine 167, glutamine 169, aspartate 315, and lysine 342 each coordinate 3-phosphoshikimate. Glutamine 169 provides a ligand contact to phosphoenolpyruvate. The Proton acceptor role is filled by aspartate 315. Residues arginine 346 and arginine 387 each contribute to the phosphoenolpyruvate site.

The protein belongs to the EPSP synthase family. In terms of assembly, monomer.

The protein localises to the cytoplasm. It catalyses the reaction 3-phosphoshikimate + phosphoenolpyruvate = 5-O-(1-carboxyvinyl)-3-phosphoshikimate + phosphate. It participates in metabolic intermediate biosynthesis; chorismate biosynthesis; chorismate from D-erythrose 4-phosphate and phosphoenolpyruvate: step 6/7. Its function is as follows. Catalyzes the transfer of the enolpyruvyl moiety of phosphoenolpyruvate (PEP) to the 5-hydroxyl of shikimate-3-phosphate (S3P) to produce enolpyruvyl shikimate-3-phosphate and inorganic phosphate. The protein is 3-phosphoshikimate 1-carboxyvinyltransferase of Coxiella burnetii (strain CbuK_Q154) (Coxiella burnetii (strain Q154)).